A 248-amino-acid polypeptide reads, in one-letter code: MSFVVIIPARFSSTRLPGKPLVDINGKPMIVHVLERVRESGAERIIVATDHEDVARAVEAAGGEVCMTRADHQSGTERLAEVVEKCGFSDDTVIVNVQGDEPMIPAVIIRQVAENLAQRQVGMATLAVPIHSAEEAFNPNAVKVVLDAEGYALYFSRATIPWDRDRFAKSLETVGDTCLRHLGIYGYRAGFIRRYVSWQPSPLEHIEMLEQLRVLWYGEKIHVAIAKAVPGTGVDTADDLERVRAEMR.

Belongs to the KdsB family.

The protein localises to the cytoplasm. The catalysed reaction is 3-deoxy-alpha-D-manno-oct-2-ulosonate + CTP = CMP-3-deoxy-beta-D-manno-octulosonate + diphosphate. It participates in nucleotide-sugar biosynthesis; CMP-3-deoxy-D-manno-octulosonate biosynthesis; CMP-3-deoxy-D-manno-octulosonate from 3-deoxy-D-manno-octulosonate and CTP: step 1/1. It functions in the pathway bacterial outer membrane biogenesis; lipopolysaccharide biosynthesis. Functionally, activates KDO (a required 8-carbon sugar) for incorporation into bacterial lipopolysaccharide in Gram-negative bacteria. The chain is 3-deoxy-manno-octulosonate cytidylyltransferase from Salmonella dublin (strain CT_02021853).